The primary structure comprises 38 residues: Potassium channel toxin alpha-KTx 3.11 (38 aa).

3 cysteine pairs are disulfide-bonded: Cys-8–Cys-28, Cys-14–Cys-33, and Cys-18–Cys-35.

The protein belongs to the short scorpion toxin superfamily. Potassium channel inhibitor family. Alpha-KTx 03 subfamily. In terms of tissue distribution, expressed by the venom gland.

The protein resides in the secreted. Its function is as follows. Blocks the voltage-gated potassium channel Kv1.3/KCNA3 (IC(50)=7.2 nM). Correnti and colleagues have also shown that this toxin inhibits Kv1.1/KCNA1, which is different from Abdel-Mottaleb and colleagues conclusions. This Odontobuthus doriae (Yellow Iranian scorpion) protein is Potassium channel toxin alpha-KTx 3.11.